A 126-amino-acid chain; its full sequence is Protein ApaG (126 aa).

The region spanning 2–126 (DISTPCIKCQ…FRLAIPNILN (125 aa)) is the ApaG domain.

The protein is Protein ApaG of Vibrio atlanticus (strain LGP32) (Vibrio splendidus (strain Mel32)).